We begin with the raw amino-acid sequence, 346 residues long: E3 ubiquitin-protein ligase ARK2C (346 aa).

2 disordered regions span residues 23–76 (PFQR…QHSG) and 267–288 (PHKY…GEES). Residues 266 to 268 (FPH) are ubiquitin binding. Residues 275–284 (PQDGKGKKDE) show a composition bias toward basic and acidic residues. Zn(2+) contacts are provided by C294 and C297. An RING-type; atypical zinc finger spans residues 294–335 (CTICLSMLEDGEDVRRLPCMHLFHQLCVDQWLAMSKKCPICR). Residues 309–313 (RLPCM) are ubiquitin binding. Zn(2+)-binding residues include H317 and C320.

This sequence belongs to the Arkadia family. In terms of assembly, monomer; binding to the ubiquitin-conjugating enzyme E2 does not trigger homodimerization.

It localises to the nucleus. It catalyses the reaction S-ubiquitinyl-[E2 ubiquitin-conjugating enzyme]-L-cysteine + [acceptor protein]-L-lysine = [E2 ubiquitin-conjugating enzyme]-L-cysteine + N(6)-ubiquitinyl-[acceptor protein]-L-lysine.. Its activity is regulated as follows. Binds free ubiquitin non-covalently via its RING-type zinc finger. Ubiquitin-binding leads to enhance the E3 ubiquitin-protein ligase activity by stabilizing the ubiquitin-conjugating enzyme E2 (donor ubiquitin) in the 'closed' conformation and activating ubiquitin transfer. Its function is as follows. E3 ubiquitin-protein ligase that acts as a regulator of motor axon elongation. Required for efficient motor axon extension in the dorsal forelimb by enhancing the transcriptional responses of the SMAD1/SMAD5/SMAD8 effectors, which are activated downstream of BMP. Acts by mediating ubiquitination and degradation of SMAD inhibitors such as SMAD6, SMAD7, SKI and SNON isoform of SKIL. The protein is E3 ubiquitin-protein ligase ARK2C of Homo sapiens (Human).